A 90-amino-acid chain; its full sequence is Large ribosomal subunit protein uL16c (90 aa).

The protein belongs to the universal ribosomal protein uL16 family. As to quaternary structure, part of the 50S ribosomal subunit.

The protein localises to the plastid. Its subcellular location is the chloroplast. The protein is Large ribosomal subunit protein uL16c (rpl16) of Oenothera ammophila (Evening primerose).